A 600-amino-acid chain; its full sequence is Elongation factor 4 (600 aa).

Positions 5–187 (KYIRNFSIIA…AIVNKLPPPK (183 aa)) constitute a tr-type G domain. GTP contacts are provided by residues 17 to 22 (DHGKST) and 134 to 137 (NKLD).

This sequence belongs to the TRAFAC class translation factor GTPase superfamily. Classic translation factor GTPase family. LepA subfamily.

It is found in the cell inner membrane. The catalysed reaction is GTP + H2O = GDP + phosphate + H(+). Required for accurate and efficient protein synthesis under certain stress conditions. May act as a fidelity factor of the translation reaction, by catalyzing a one-codon backward translocation of tRNAs on improperly translocated ribosomes. Back-translocation proceeds from a post-translocation (POST) complex to a pre-translocation (PRE) complex, thus giving elongation factor G a second chance to translocate the tRNAs correctly. Binds to ribosomes in a GTP-dependent manner. This chain is Elongation factor 4, found in Rickettsia conorii (strain ATCC VR-613 / Malish 7).